Here is a 293-residue protein sequence, read N- to C-terminus: Polyamine aminopropyltransferase (293 aa).

Residues 10-244 (HIWFTEYHNN…GFWSFTLASK (235 aa)) enclose the PABS domain. Glutamine 39 contributes to the S-methyl-5'-thioadenosine binding site. Spermidine is bound by residues histidine 70 and aspartate 94. Residues glutamate 114 and 145–146 (DG) contribute to the S-methyl-5'-thioadenosine site. The active-site Proton acceptor is the aspartate 163. Spermidine is bound at residue 163–166 (DCPD). Proline 170 is a binding site for S-methyl-5'-thioadenosine.

Belongs to the spermidine/spermine synthase family. In terms of assembly, homodimer or homotetramer.

Its subcellular location is the cytoplasm. The enzyme catalyses S-adenosyl 3-(methylsulfanyl)propylamine + putrescine = S-methyl-5'-thioadenosine + spermidine + H(+). It participates in amine and polyamine biosynthesis; spermidine biosynthesis; spermidine from putrescine: step 1/1. In terms of biological role, catalyzes the irreversible transfer of a propylamine group from the amino donor S-adenosylmethioninamine (decarboxy-AdoMet) to putrescine (1,4-diaminobutane) to yield spermidine. The sequence is that of Polyamine aminopropyltransferase from Methanocaldococcus jannaschii (strain ATCC 43067 / DSM 2661 / JAL-1 / JCM 10045 / NBRC 100440) (Methanococcus jannaschii).